The chain runs to 270 residues: Proteasome subunit alpha (270 aa).

A disordered region spans residues 229 to 270 (LLDTEAAGSTPTDAPSDTEDGDSTDGTDRADGTTDSTEETEK). Residues 244-253 (SDTEDGDSTD) are compositionally biased toward acidic residues.

It belongs to the peptidase T1A family. The 20S proteasome core is composed of 14 alpha and 14 beta subunits that assemble into four stacked heptameric rings, resulting in a barrel-shaped structure. The two inner rings, each composed of seven catalytic beta subunits, are sandwiched by two outer rings, each composed of seven alpha subunits. The catalytic chamber with the active sites is on the inside of the barrel. Has a gated structure, the ends of the cylinder being occluded by the N-termini of the alpha-subunits. Is capped by the proteasome-associated ATPase, ARC.

It localises to the cytoplasm. It functions in the pathway protein degradation; proteasomal Pup-dependent pathway. With respect to regulation, the formation of the proteasomal ATPase ARC-20S proteasome complex, likely via the docking of the C-termini of ARC into the intersubunit pockets in the alpha-rings, may trigger opening of the gate for substrate entry. Interconversion between the open-gate and close-gate conformations leads to a dynamic regulation of the 20S proteasome proteolysis activity. In terms of biological role, component of the proteasome core, a large protease complex with broad specificity involved in protein degradation. This Streptomyces griseus subsp. griseus (strain JCM 4626 / CBS 651.72 / NBRC 13350 / KCC S-0626 / ISP 5235) protein is Proteasome subunit alpha.